We begin with the raw amino-acid sequence, 457 residues long: Argininosuccinate lyase (457 aa).

It belongs to the lyase 1 family. Argininosuccinate lyase subfamily.

It is found in the cytoplasm. The catalysed reaction is 2-(N(omega)-L-arginino)succinate = fumarate + L-arginine. The protein operates within amino-acid biosynthesis; L-arginine biosynthesis; L-arginine from L-ornithine and carbamoyl phosphate: step 3/3. The chain is Argininosuccinate lyase from Yersinia pseudotuberculosis serotype O:3 (strain YPIII).